Here is a 126-residue protein sequence, read N- to C-terminus: Interleukin-18-binding protein (126 aa).

The first 20 residues, 1 to 20 (MRILFLIAFMYGCVHPYVNA), serve as a signal peptide directing secretion.

Belongs to the orthopoxvirus OPG022 family.

It localises to the secreted. In terms of biological role, soluble IL18-binding protein that may modulate the host antiviral response. The polypeptide is Interleukin-18-binding protein (OPG022) (Bos taurus (Bovine)).